The sequence spans 379 residues: Inactive 2'-5'-oligoadenylate synthase 1B (379 aa).

Residues 1 to 355 (MEQELRSIPA…VPTEVDIPSQ (355 aa)) are Cytoplasmic-facing. Residues 356–374 (NYFFHIICLIFWLLLRLIF) form a helical; Anchor for type IV membrane protein membrane-spanning segment. Over 375–379 (GKHSV) the chain is Extracellular.

Belongs to the 2-5A synthase family. As to quaternary structure, interacts with OSBPL1A and ABCF3. Highly expressed in the brain, liver, spleen and heart.

Its subcellular location is the endoplasmic reticulum membrane. Functionally, does not have 2'-5'-OAS activity, but can bind double-stranded RNA. Displays antiviral activity against viruses via an alternative antiviral pathway independent of RNase L. The sequence is that of Inactive 2'-5'-oligoadenylate synthase 1B (Oas1b) from Rattus norvegicus (Rat).